The chain runs to 259 residues: Tubulin-specific chaperone C (259 aa).

Residues 112–241 (PEVYFENDTL…DEHPILDFTW (130 aa)) form the C-CAP/cofactor C-like domain.

The protein belongs to the TBCC family.

It localises to the cytoplasm. It is found in the cytoskeleton. Its function is as follows. Tubulin-folding protein; involved in the final step of the tubulin folding pathway. In Schizosaccharomyces pombe (strain 972 / ATCC 24843) (Fission yeast), this protein is Tubulin-specific chaperone C (cin2).